Consider the following 1016-residue polypeptide: Kinesin-like protein KIN-14K (1016 aa).

In terms of domain architecture, Calponin-homology (CH) spans 14–121 (ADRRAEVIEW…CLLVLRESVS (108 aa)). The tract at residues 123 to 176 (GLRDGTSKAPLRKKWRVPETGEPLVPGVAQGKTSPGEDKRNGLPDPKSQQKTPI) is disordered. Positions 288–354 (VNGTNEENQM…EVMTSMHEQQ (67 aa)) form a coiled coil. One can recognise a Kinesin motor domain in the interval 481 to 808 (NIRVYCRVRP…LKFAERVSGV (328 aa)). 565-572 (GQTGSGKT) contributes to the ATP binding site. The stretch at 820–852 (KDIKELLEQVASLKDTIVRKDTEIEQLQLMKDK) forms a coiled coil. Composition is skewed to polar residues over residues 884 to 893 (NQQSQLSDPQ) and 990 to 1004 (KTPN…QLIG). Disordered stretches follow at residues 884–912 (NQQS…DITP) and 971–1016 (LTKN…RWQK).

This sequence belongs to the TRAFAC class myosin-kinesin ATPase superfamily. Kinesin family. KIN-14 subfamily.

This Oryza sativa subsp. japonica (Rice) protein is Kinesin-like protein KIN-14K.